Here is a 134-residue protein sequence, read N- to C-terminus: Prefoldin subunit alpha (134 aa).

It belongs to the prefoldin subunit alpha family. Heterohexamer of two alpha and four beta subunits.

The protein resides in the cytoplasm. Its function is as follows. Molecular chaperone capable of stabilizing a range of proteins. Seems to fulfill an ATP-independent, HSP70-like function in archaeal de novo protein folding. This is Prefoldin subunit alpha from Pyrobaculum calidifontis (strain DSM 21063 / JCM 11548 / VA1).